A 2048-amino-acid polypeptide reads, in one-letter code: Fanconi anemia group M protein (2048 aa).

Polar residues predominate over residues 1 to 37 (MSGRQRTLFQTWGSSISRSSGTPGCSSGTERPQSPGS). The tract at residues 1-45 (MSGRQRTLFQTWGSSISRSSGTPGCSSGTERPQSPGSSKAPLPAA) is disordered. Position 34 is a phosphoserine (serine 34). In terms of domain architecture, Helicase ATP-binding spans 98–266 (ISRAALFCNT…QVITNLLIGQ (169 aa)). 111 to 118 (LPTGLGKT) is a binding site for ATP. Residues 214-217 (DEAH) carry the DEAH box motif. The region spanning 452–627 (KLEEVVIEHF…VLHFYQRSPR (176 aa)) is the Helicase C-terminal domain. The tract at residues 661–800 (SIFSYRDGMR…TSTFIAPRNE (140 aa)) is interaction with CENPS/CENPSX. Disordered regions lie at residues 1433-1476 (NVLN…NFPK), 1518-1540 (LSEEDAEYVSSDENDESENEQDS), and 1668-1809 (ILPD…HTSL). Acidic residues predominate over residues 1518–1538 (LSEEDAEYVSSDENDESENEQ). Residues serine 1673 and serine 1674 each carry the phosphoserine modification. Composition is skewed to polar residues over residues 1703–1745 (HCLN…ISEV), 1753–1767 (HNEVQSTTPPFTTVD), and 1786–1797 (EDSSTSGASCSK). Residues 1727-2048 (LAKQSKQTSL…LNQDRLKSDI (322 aa)) form an interaction with FAAP24 region.

It belongs to the DEAD box helicase family. DEAH subfamily. FANCM sub-subfamily. In terms of assembly, component of the Fanconi anemia (FA) core complex, which consists of CENPS, CENPX, FANCA, FANCB, FANCC, FANCE, FANCF, FANCG, FANCL, FANCM, FAAP24 and FAAP100. The FA core complex associates with Bloom syndrome (BLM) complex, which consists of at least BLM, DNA topoisomerase 3-alpha/TOP3A, RMI1/BLAP75, RPA1/RPA70 and RPA2/RPA32. This supercomplex between FA and BLM complexes has been called BRAFT. Forms a discrete complex with CENPS and CENPX, called FANCM-MHF; this interaction stimulates DNA binding and replication fork remodeling by FANCM and stabilizes the binding partners. Forms a heterodimer with FAAP24; this interaction increases FANCM single-stranded DNA-binding activity. Post-translationally, phosphorylated; hyperphosphorylated in response to genotoxic stress. Expressed in germ cells of fetal and adult ovaries. In fetal ovaries, it is present in oogonia but expression is stronger in pachytene stage oocytes. Expressed in oocytes arrested at the diplotene stage of prophase I during the last trimester of pregnancy and in adults. Expressed in the testis.

The protein localises to the nucleus. The catalysed reaction is ATP + H2O = ADP + phosphate + H(+). Functionally, DNA-dependent ATPase component of the Fanconi anemia (FA) core complex. Required for the normal activation of the FA pathway, leading to monoubiquitination of the FANCI-FANCD2 complex in response to DNA damage, cellular resistance to DNA cross-linking drugs, and prevention of chromosomal breakage. In complex with CENPS and CENPX, binds double-stranded DNA (dsDNA), fork-structured DNA (fsDNA) and Holliday junction substrates. Its ATP-dependent DNA branch migration activity can process branched DNA structures such as a movable replication fork. This activity is strongly stimulated in the presence of CENPS and CENPX. In complex with FAAP24, efficiently binds to single-strand DNA (ssDNA), splayed-arm DNA, and 3'-flap substrates. In vitro, on its own, strongly binds ssDNA oligomers and weakly fsDNA, but does not bind to dsDNA. The chain is Fanconi anemia group M protein (FANCM) from Homo sapiens (Human).